A 519-amino-acid chain; its full sequence is Cytosol aminopeptidase (519 aa).

N6-succinyllysine is present on K45. S54 is modified (phosphoserine). Residues K61 and K103 each carry the N6-succinyllysine modification. A phosphoserine mark is found at S180 and S194. Zn(2+)-binding residues include L202 and M203. K221 carries the post-translational modification N6-acetyllysine; alternate. K221 bears the N6-succinyllysine; alternate mark. S238 bears the Phosphoserine mark. Zn(2+)-binding residues include K282 and D287. Residues K282, D287, S292, and K294 each contribute to the substrate site. D287 is a Mg(2+) binding site. K294 is a catalytic residue. R303, D305, D364, and E366 together coordinate Zn(2+). Substrate-binding residues include D305 and D364. D364 and E366 together coordinate Mg(2+). R368 is a catalytic residue. The residue at position 455 (K455) is an N6-acetyllysine; alternate. N6-succinyllysine; alternate is present on K455. K476 carries the post-translational modification N6-succinyllysine. K489 is subject to N6-acetyllysine; alternate. K489 bears the N6-succinyllysine; alternate mark.

The protein belongs to the peptidase M17 family. In terms of assembly, homohexamer. Zn(2+) serves as cofactor. It depends on Mn(2+) as a cofactor.

It localises to the cytoplasm. The enzyme catalyses Release of an N-terminal amino acid, Xaa-|-Yaa-, in which Xaa is preferably Leu, but may be other amino acids including Pro although not Arg or Lys, and Yaa may be Pro. Amino acid amides and methyl esters are also readily hydrolyzed, but rates on arylamides are exceedingly low.. The catalysed reaction is an S-substituted L-cysteinylglycine + H2O = an S-substituted L-cysteine + glycine. It catalyses the reaction L-cysteinylglycine + H2O = L-cysteine + glycine. It carries out the reaction S-benzyl-L-cysteinylglycine + H2O = S-benzyl-L-cysteine + glycine. The enzyme catalyses Release of N-terminal proline from a peptide.. In terms of biological role, cytosolic metallopeptidase that catalyzes the removal of unsubstituted N-terminal hydrophobic amino acids from various peptides. The presence of Zn(2+) ions is essential for the peptidase activity, and the association with other cofactors can modulate the substrate spectificity of the enzyme. For instance, in the presence of Mn(2+), it displays a specific Cys-Gly hydrolyzing activity of Cys-Gly-S-conjugates. Involved in the metabolism of glutathione and in the degradation of glutathione S-conjugates, which may play a role in the control of the cell redox status. The protein is Cytosol aminopeptidase of Mus musculus (Mouse).